The primary structure comprises 144 residues: MVEVSEEDIRNLAARHQEFQRQAEGLKQQMNMVQASITSCDQATVTINELKTVSAEGKTAETMVPVGFGSFVYAEIKNADKVIVDLGAGFSAEETADEAVETLKRRKEQLTKILEQMSASLTKYIQGMQALEVEAEKLQQPSQA.

The protein belongs to the prefoldin subunit alpha family. In terms of assembly, heterohexamer of two alpha and four beta subunits.

Its subcellular location is the cytoplasm. Functionally, molecular chaperone capable of stabilizing a range of proteins. Seems to fulfill an ATP-independent, HSP70-like function in archaeal de novo protein folding. The chain is Prefoldin subunit alpha from Methanosarcina barkeri (strain Fusaro / DSM 804).